The sequence spans 353 residues: Holliday junction branch migration complex subunit RuvB (353 aa).

Residues Ala4 to Tyr186 form a large ATPase domain (RuvB-L) region. ATP contacts are provided by residues Ile25, Arg26, Gly67, Lys70, Thr71, Thr72, Glu133 to Phe135, Arg176, Tyr186, and Arg223. Mg(2+) is bound at residue Thr71. The segment at Ser187–Asp257 is small ATPAse domain (RuvB-S). A head domain (RuvB-H) region spans residues Glu260 to Asp353. 3 residues coordinate DNA: Arg296, Arg315, and Arg320.

Belongs to the RuvB family. In terms of assembly, homohexamer. Forms an RuvA(8)-RuvB(12)-Holliday junction (HJ) complex. HJ DNA is sandwiched between 2 RuvA tetramers; dsDNA enters through RuvA and exits via RuvB. An RuvB hexamer assembles on each DNA strand where it exits the tetramer. Each RuvB hexamer is contacted by two RuvA subunits (via domain III) on 2 adjacent RuvB subunits; this complex drives branch migration. In the full resolvosome a probable DNA-RuvA(4)-RuvB(12)-RuvC(2) complex forms which resolves the HJ.

It localises to the cytoplasm. The catalysed reaction is ATP + H2O = ADP + phosphate + H(+). Functionally, the RuvA-RuvB-RuvC complex processes Holliday junction (HJ) DNA during genetic recombination and DNA repair, while the RuvA-RuvB complex plays an important role in the rescue of blocked DNA replication forks via replication fork reversal (RFR). RuvA specifically binds to HJ cruciform DNA, conferring on it an open structure. The RuvB hexamer acts as an ATP-dependent pump, pulling dsDNA into and through the RuvAB complex. RuvB forms 2 homohexamers on either side of HJ DNA bound by 1 or 2 RuvA tetramers; 4 subunits per hexamer contact DNA at a time. Coordinated motions by a converter formed by DNA-disengaged RuvB subunits stimulates ATP hydrolysis and nucleotide exchange. Immobilization of the converter enables RuvB to convert the ATP-contained energy into a lever motion, pulling 2 nucleotides of DNA out of the RuvA tetramer per ATP hydrolyzed, thus driving DNA branch migration. The RuvB motors rotate together with the DNA substrate, which together with the progressing nucleotide cycle form the mechanistic basis for DNA recombination by continuous HJ branch migration. Branch migration allows RuvC to scan DNA until it finds its consensus sequence, where it cleaves and resolves cruciform DNA. This is Holliday junction branch migration complex subunit RuvB from Pseudomonas fluorescens (strain Pf0-1).